We begin with the raw amino-acid sequence, 429 residues long: Dihydroorotase (429 aa).

Residues His-62 and His-64 each coordinate Zn(2+). Residues 64–66 (HFR) and Asn-96 contribute to the substrate site. Zn(2+) is bound by residues Asp-154, His-181, and His-234. Substrate is bound at residue Asn-280. Asp-307 serves as a coordination point for Zn(2+). Asp-307 is an active-site residue. Substrate-binding positions include His-311 and 325–326 (FG).

The protein belongs to the metallo-dependent hydrolases superfamily. DHOase family. Class I DHOase subfamily. Zn(2+) serves as cofactor.

It catalyses the reaction (S)-dihydroorotate + H2O = N-carbamoyl-L-aspartate + H(+). The protein operates within pyrimidine metabolism; UMP biosynthesis via de novo pathway; (S)-dihydroorotate from bicarbonate: step 3/3. Functionally, catalyzes the reversible cyclization of carbamoyl aspartate to dihydroorotate. This Latilactobacillus sakei subsp. sakei (strain 23K) (Lactobacillus sakei subsp. sakei) protein is Dihydroorotase.